A 303-amino-acid polypeptide reads, in one-letter code: 4-sulfomuconolactone hydrolase (303 aa).

Belongs to the metallo-dependent hydrolases superfamily. Sulfomuconolactone hydrolase family. Monomer. The cofactor is Zn(2+).

It catalyses the reaction 4-sulfomuconolactone + H2O = maleylacetate + sulfite + 2 H(+). Completely inhibited by ZnCl(2) and CuCl(2). In terms of biological role, involved in the degradation of 4-sulfocatechol which is a central intermediate in the degradation of substituted sulfonated benzenes. Catalyzes the hydrolytical desulfonation of 4-sulfomuconolactone to yield maleylacetate. The sequence is that of 4-sulfomuconolactone hydrolase from Hydrogenophaga intermedia.